The following is a 121-amino-acid chain: Flagellar protein FliT (121 aa).

The segment at M1–L50 is required for homodimerization. The tract at residues M60–V98 is fliD binding.

This sequence belongs to the FliT family. As to quaternary structure, homodimer. Interacts with FliD and FlhC.

It is found in the cytoplasm. The protein localises to the cytosol. Dual-function protein that regulates the transcription of class 2 flagellar operons and that also acts as an export chaperone for the filament-capping protein FliD. As a transcriptional regulator, acts as an anti-FlhDC factor; it directly binds FlhC, thus inhibiting the binding of the FlhC/FlhD complex to class 2 promoters, resulting in decreased expression of class 2 flagellar operons. As a chaperone, effects FliD transition to the membrane by preventing its premature polymerization, and by directing it to the export apparatus. This is Flagellar protein FliT from Escherichia coli O6:K15:H31 (strain 536 / UPEC).